A 182-amino-acid polypeptide reads, in one-letter code: Isopentenyl-diphosphate Delta-isomerase (182 aa).

Residues His25 and His32 each coordinate Mn(2+). The region spanning 30–164 (LLHLAFSSWL…PWAFSPWMVM (135 aa)) is the Nudix hydrolase domain. The active site involves Cys67. Mn(2+) is bound at residue His69. Mg(2+) is bound at residue Glu87. Mn(2+) contacts are provided by Glu114 and Glu116. The active site involves Glu116.

This sequence belongs to the IPP isomerase type 1 family. As to quaternary structure, homodimer. Requires Mg(2+) as cofactor. Mn(2+) is required as a cofactor.

It is found in the cytoplasm. The enzyme catalyses isopentenyl diphosphate = dimethylallyl diphosphate. It participates in isoprenoid biosynthesis; dimethylallyl diphosphate biosynthesis; dimethylallyl diphosphate from isopentenyl diphosphate: step 1/1. Its function is as follows. Catalyzes the 1,3-allylic rearrangement of the homoallylic substrate isopentenyl (IPP) to its highly electrophilic allylic isomer, dimethylallyl diphosphate (DMAPP). The polypeptide is Isopentenyl-diphosphate Delta-isomerase (Shigella flexneri serotype 5b (strain 8401)).